A 163-amino-acid chain; its full sequence is Small ribosomal subunit protein uS9 (163 aa).

Residues 1-25 (MAENTNNSAVTETEETTAAFTTETN) are compositionally biased toward low complexity. The disordered stretch occupies residues 1–40 (MAENTNNSAVTETEETTAAFTTETNSGAGTGTSTIAPGYG).

This sequence belongs to the universal ribosomal protein uS9 family.

This Bifidobacterium animalis subsp. lactis (strain AD011) protein is Small ribosomal subunit protein uS9.